The following is a 259-amino-acid chain: 2,3-dihydroxy-2,3-dihydro-p-cumate dehydrogenase (259 aa).

NAD(+) is bound at residue 18 to 42; the sequence is VTGGAHGIGLGIVERLLGLGARVTA. Residue Tyr-163 is the Proton acceptor of the active site.

Belongs to the short-chain dehydrogenases/reductases (SDR) family.

It catalyses the reaction (2R,3S)-2,3-dihydroxy-2,3-dihydro-p-cumate + NAD(+) = 2,3-dihydroxy-p-cumate + NADH + H(+). Its pathway is aromatic compound metabolism; p-cumate degradation; acetaldehyde and pyruvate from p-cumate: step 2/7. This is 2,3-dihydroxy-2,3-dihydro-p-cumate dehydrogenase (cmtB) from Pseudomonas putida (strain ATCC 700007 / DSM 6899 / JCM 31910 / BCRC 17059 / LMG 24140 / F1).